Consider the following 767-residue polypeptide: Tetratricopeptide repeat protein 16 (767 aa).

9 TPR repeats span residues valine 18 to leucine 51, aspartate 53 to asparagine 85, alanine 93 to asparagine 126, serine 128 to lysine 155, alanine 208 to aspartate 241, proline 242 to threonine 275, leucine 288 to glutamate 321, lysine 322 to aspartate 355, and glycine 363 to lysine 396. The interval glutamate 612–serine 733 is disordered. A compositionally biased stretch (polar residues) spans glutamine 684–tryptophan 718.

The protein is Tetratricopeptide repeat protein 16 (Ttc16) of Mus musculus (Mouse).